A 234-amino-acid polypeptide reads, in one-letter code: Orotate phosphoribosyltransferase (234 aa).

Residue Lys-37 participates in 5-phospho-alpha-D-ribose 1-diphosphate binding. Phe-45 to Phe-46 is a binding site for orotate. Residues Tyr-83–Lys-84, Arg-109, Lys-110, Lys-113, His-115, and Asp-134–Ser-142 each bind 5-phospho-alpha-D-ribose 1-diphosphate. Ser-138 and Arg-166 together coordinate orotate.

This sequence belongs to the purine/pyrimidine phosphoribosyltransferase family. PyrE subfamily. As to quaternary structure, homodimer. Mg(2+) is required as a cofactor.

It catalyses the reaction orotidine 5'-phosphate + diphosphate = orotate + 5-phospho-alpha-D-ribose 1-diphosphate. It functions in the pathway pyrimidine metabolism; UMP biosynthesis via de novo pathway; UMP from orotate: step 1/2. Its function is as follows. Catalyzes the transfer of a ribosyl phosphate group from 5-phosphoribose 1-diphosphate to orotate, leading to the formation of orotidine monophosphate (OMP). This Methylibium petroleiphilum (strain ATCC BAA-1232 / LMG 22953 / PM1) protein is Orotate phosphoribosyltransferase.